A 196-amino-acid polypeptide reads, in one-letter code: Anthranilate synthase component 2 (196 aa).

The Glutamine amidotransferase type-1 domain occupies N3–G196. G57–S59 serves as a coordination point for L-glutamine. C84 functions as the Nucleophile; for GATase activity in the catalytic mechanism. L-glutamine-binding positions include Q88 and S134–L135. Active-site for GATase activity residues include H170 and E172.

Heterotetramer consisting of two non-identical subunits: a beta subunit (TrpG) and a large alpha subunit (TrpE).

The catalysed reaction is chorismate + L-glutamine = anthranilate + pyruvate + L-glutamate + H(+). It functions in the pathway amino-acid biosynthesis; L-tryptophan biosynthesis; L-tryptophan from chorismate: step 1/5. In terms of biological role, part of a heterotetrameric complex that catalyzes the two-step biosynthesis of anthranilate, an intermediate in the biosynthesis of L-tryptophan. In the first step, the glutamine-binding beta subunit (TrpG) of anthranilate synthase (AS) provides the glutamine amidotransferase activity which generates ammonia as a substrate that, along with chorismate, is used in the second step, catalyzed by the large alpha subunit of AS (TrpE) to produce anthranilate. In the absence of TrpG, TrpE can synthesize anthranilate directly from chorismate and high concentrations of ammonia. This is Anthranilate synthase component 2 (trpG) from Buchnera aphidicola subsp. Schizaphis graminum (strain Sg).